Consider the following 243-residue polypeptide: Probable enoyl-CoA hydratase echA6 (243 aa).

This sequence belongs to the enoyl-CoA hydratase/isomerase family.

The catalysed reaction is a (3S)-3-hydroxyacyl-CoA = a (2E)-enoyl-CoA + H2O. It carries out the reaction a 4-saturated-(3S)-3-hydroxyacyl-CoA = a (3E)-enoyl-CoA + H2O. Functionally, could possibly oxidize fatty acids using specific components. This Mycobacterium bovis (strain ATCC BAA-935 / AF2122/97) protein is Probable enoyl-CoA hydratase echA6 (echA6).